The primary structure comprises 336 residues: Atypical chemokine receptor 1 (336 aa).

The mediates Plasmodium vivax Duffy receptor (PVDR) binding stretch occupies residues 1–30 (MGNCLHRAELSPSTENSSQLDFEDVWNSSY). The Extracellular segment spans residues 1 to 63 (MGNCLHRAEL…CNLLDDSALP (63 aa)). Asparagine 16 carries an N-linked (GlcNAc...) asparagine glycan. Tyrosine 30 is subject to Sulfotyrosine. Asparagine 33 is a glycosylation site (N-linked (GlcNAc...) asparagine). Tyrosine 41 is subject to Sulfotyrosine. Disulfide bonds link cysteine 51-cysteine 276 and cysteine 129-cysteine 195. Residues 64–84 (FFILTSVLGILASSTVLFMLF) form a helical membrane-spanning segment. Over 85-95 (RPLFRWQLCPG) the chain is Cytoplasmic. The helical transmembrane segment at 96-116 (WPVLAQLAVGSALFSIVVPVL) threads the bilayer. Residues 117–129 (APGLGSTRSSALC) lie on the Extracellular side of the membrane. Residues 130 to 153 (SLGYCVWYGSAFAQALLLGCHASL) form a helical membrane-spanning segment. The Cytoplasmic segment spans residues 154-166 (GHRLGAGQVPGLT). A helical transmembrane segment spans residues 167–187 (LGLTVGIWGVAALLTLPVTLA). At 188–207 (SGASGGLCTLIYSTELKALQ) the chain is on the extracellular side. Residues 208 to 228 (ATHTVACLAIFVLLPLGLFGA) form a helical membrane-spanning segment. Residues 229-244 (KGLKKALGMGPGPWMN) lie on the Cytoplasmic side of the membrane. A helical transmembrane segment spans residues 245 to 265 (ILWAWFIFWWPHGVVLGLDFL). The Extracellular segment spans residues 266–287 (VRSKLLLLSTCLAQQALDLLLN). The chain crosses the membrane as a helical span at residues 288–308 (LAEALAILHCVATPLLLALFC). Over 309–336 (HQATRTLLPSLPLPEGWSSHLDTLGSKS) the chain is Cytoplasmic.

It belongs to the G-protein coupled receptor 1 family. Atypical chemokine receptor subfamily. (Microbial infection) Interacts (via N-terminal extracellular domain) with Plasmodium vivax Duffy receptor (PVDR) (via PvRII region). As to quaternary structure, (Microbial infection) Interacts (via N-terminal extracellular domain) with Plasmodium knowlesi Duffy receptor alpha form (DBPalpha) (via region II). Post-translationally, sulfation at Tyr-41 facilitates interaction with MGSA/CXCL1, RANTES/CCL5 and MCP-1/CCL2 but not IL8/CXCL8. Sulfation at Tyr-30 facilitates interaction with IL8/CXCL8. In terms of processing, (Microbial infection) Sulfation at Tyr-41 facilitates interaction with Plasmodium vivax Duffy receptor (PVDR). Sulfation at Tyr-30/Tyr-41 and Tyr-41 alone increases binding affinity of Plasmodium vivax parasites and likely promotes invasion of red blood cells. (Microbial infection) Sulfation at Tyr-41 facilitates interaction with Plasmodium knowlesi Duffy receptor alpha form (DBPalpha). Sulfation at Tyr-30/Tyr-41 and Tyr-41 alone increases binding affinity of Plasmodium knowlesi parasites and likely promotes invasion of red blood cells. In terms of tissue distribution, found in adult kidney, adult spleen, bone marrow and fetal liver. In particular, it is expressed along postcapillary venules throughout the body, except in the adult liver. Erythroid cells and postcapillary venule endothelium are the principle tissues expressing duffy. Fy(-A-B) individuals do not express duffy in the bone marrow, however they do, in postcapillary venule endothelium.

The protein resides in the early endosome. It localises to the recycling endosome. Its subcellular location is the membrane. Functionally, atypical chemokine receptor that controls chemokine levels and localization via high-affinity chemokine binding that is uncoupled from classic ligand-driven signal transduction cascades, resulting instead in chemokine sequestration, degradation, or transcytosis. Also known as interceptor (internalizing receptor) or chemokine-scavenging receptor or chemokine decoy receptor. Has a promiscuous chemokine-binding profile, interacting with inflammatory chemokines of both the CXC and the CC subfamilies but not with homeostatic chemokines. Acts as a receptor for chemokines including CCL2, CCL5, CCL7, CCL11, CCL13, CCL14, CCL17, CXCL5, CXCL6, IL8/CXCL8, CXCL11, GRO, RANTES, MCP-1 and TARC. May regulate chemokine bioavailability and, consequently, leukocyte recruitment through two distinct mechanisms: when expressed in endothelial cells, it sustains the abluminal to luminal transcytosis of tissue-derived chemokines and their subsequent presentation to circulating leukocytes; when expressed in erythrocytes, serves as blood reservoir of cognate chemokines but also as a chemokine sink, buffering potential surges in plasma chemokine levels. Its function is as follows. (Microbial infection) Acts as a receptor for the malaria parasite Plasmodium vivax. In terms of biological role, (Microbial infection) Acts as a receptor for the malaria parasite Plasmodium knowlesi. The protein is Atypical chemokine receptor 1 (ACKR1) of Homo sapiens (Human).